Reading from the N-terminus, the 701-residue chain is Larval serum protein 2 (701 aa).

An N-terminal signal peptide occupies residues 1–21; the sequence is MKSFTVIALAAVALLATLGQA. Asn-204 is a glycosylation site (N-linked (GlcNAc...) asparagine).

The protein belongs to the hemocyanin family. Homohexamer.

It localises to the secreted. The protein localises to the extracellular space. Larval storage protein (LSP) which may serve as a store of amino acids for synthesis of adult proteins. The protein is Larval serum protein 2 (Lsp2) of Drosophila melanogaster (Fruit fly).